Reading from the N-terminus, the 336-residue chain is Probable allantoicase (336 aa).

The protein belongs to the allantoicase family.

The catalysed reaction is allantoate + H2O = (S)-ureidoglycolate + urea. It functions in the pathway nitrogen metabolism; (S)-allantoin degradation; (S)-ureidoglycolate from allantoate (aminidohydrolase route): step 1/1. This Acinetobacter baumannii (strain AYE) protein is Probable allantoicase.